The chain runs to 341 residues: MRMFRESKSEEKKSPSSQTAGLFATVPSLKDIMIDRLIEQLGGIAELNKQVVRDPRLWGAINERLTQHFLLLVVQGKQGQVEAMLKVNPALILFARGDVTDYSGQTFKNISAWEYVLWAYDSHMYRMLFNYIPKEQRPLALQQLIDLETNGIAYTLSEKVMNAEREAEETRETIIREAHYDFSPLIDALQTYVTNVERWSFEECVEHWRKKVGGAQCMVPVHVGNEYCYPDRSFDPIPRFNEKNLPRRHNFYNYVSGADESWFPLSPAGLGTNFAIMRGCMRAVAGACWRVGRQWACNDLAAITALREVRQSDLIQLKEQLQNPAPESAPSTSKTLRSKNP.

Positions Ala-153–His-179 form a coiled coil. Residues Glu-319–Thr-335 are compositionally biased toward polar residues. Residues Glu-319–Pro-341 form a disordered region.

This is an uncharacterized protein from Coxiella burnetii (strain RSA 493 / Nine Mile phase I).